A 430-amino-acid polypeptide reads, in one-letter code: Adenylosuccinate synthetase (430 aa).

GTP-binding positions include 12-18 (GDEGKGK) and 40-42 (GHT). The active-site Proton acceptor is Asp-13. The Mg(2+) site is built by Asp-13 and Gly-40. IMP contacts are provided by residues 13-16 (DEGK), 38-41 (NAGH), Thr-128, Arg-142, Gln-223, Thr-238, and Arg-302. His-41 (proton donor) is an active-site residue. 298–304 (TTTGRPR) serves as a coordination point for substrate. GTP is bound by residues Arg-304, 330-332 (SID), and 412-414 (SVG).

This sequence belongs to the adenylosuccinate synthetase family. In terms of assembly, homodimer. Mg(2+) is required as a cofactor.

Its subcellular location is the cytoplasm. It catalyses the reaction IMP + L-aspartate + GTP = N(6)-(1,2-dicarboxyethyl)-AMP + GDP + phosphate + 2 H(+). Its pathway is purine metabolism; AMP biosynthesis via de novo pathway; AMP from IMP: step 1/2. In terms of biological role, plays an important role in the de novo pathway of purine nucleotide biosynthesis. Catalyzes the first committed step in the biosynthesis of AMP from IMP. The protein is Adenylosuccinate synthetase of Streptococcus pyogenes serotype M4 (strain MGAS10750).